Reading from the N-terminus, the 306-residue chain is D-alanine--D-alanine ligase (306 aa).

Residues 101–303 (KLLWQGAGLP…FSQLVVRILE (203 aa)) enclose the ATP-grasp domain. 134-189 (ISALGLPLIVKPSREGSSVGMTKVVEENALQGALSLAFQHDDEILIEKWLCGPEFT) contributes to the ATP binding site. Mg(2+)-binding residues include Asp257, Glu270, and Asn272.

The protein belongs to the D-alanine--D-alanine ligase family. Mg(2+) is required as a cofactor. Requires Mn(2+) as cofactor.

Its subcellular location is the cytoplasm. The enzyme catalyses 2 D-alanine + ATP = D-alanyl-D-alanine + ADP + phosphate + H(+). The protein operates within cell wall biogenesis; peptidoglycan biosynthesis. Cell wall formation. The sequence is that of D-alanine--D-alanine ligase from Salmonella paratyphi A (strain ATCC 9150 / SARB42).